A 326-amino-acid polypeptide reads, in one-letter code: Lipoyl synthase (326 aa).

Residues Cys-56, Cys-61, Cys-67, Cys-82, Cys-86, Cys-89, and Ser-298 each coordinate [4Fe-4S] cluster. A Radical SAM core domain is found at 68–287; it reads WEDREATFLI…KDEADAIGYS (220 aa).

It belongs to the radical SAM superfamily. Lipoyl synthase family. [4Fe-4S] cluster serves as cofactor.

It is found in the cytoplasm. It carries out the reaction [[Fe-S] cluster scaffold protein carrying a second [4Fe-4S](2+) cluster] + N(6)-octanoyl-L-lysyl-[protein] + 2 oxidized [2Fe-2S]-[ferredoxin] + 2 S-adenosyl-L-methionine + 4 H(+) = [[Fe-S] cluster scaffold protein] + N(6)-[(R)-dihydrolipoyl]-L-lysyl-[protein] + 4 Fe(3+) + 2 hydrogen sulfide + 2 5'-deoxyadenosine + 2 L-methionine + 2 reduced [2Fe-2S]-[ferredoxin]. It participates in protein modification; protein lipoylation via endogenous pathway; protein N(6)-(lipoyl)lysine from octanoyl-[acyl-carrier-protein]: step 2/2. Functionally, catalyzes the radical-mediated insertion of two sulfur atoms into the C-6 and C-8 positions of the octanoyl moiety bound to the lipoyl domains of lipoate-dependent enzymes, thereby converting the octanoylated domains into lipoylated derivatives. The polypeptide is Lipoyl synthase (Streptomyces griseus subsp. griseus (strain JCM 4626 / CBS 651.72 / NBRC 13350 / KCC S-0626 / ISP 5235)).